A 79-amino-acid polypeptide reads, in one-letter code: Cell division topological specificity factor (79 aa).

This sequence belongs to the MinE family.

Functionally, prevents the cell division inhibition by proteins MinC and MinD at internal division sites while permitting inhibition at polar sites. This ensures cell division at the proper site by restricting the formation of a division septum at the midpoint of the long axis of the cell. This chain is Cell division topological specificity factor, found in Nitratiruptor sp. (strain SB155-2).